Reading from the N-terminus, the 658-residue chain is ATP-dependent DNA helicase Rep (658 aa).

The 280-residue stretch at 1–280 (MSLNFNQKNA…IKMEQNYRSY (280 aa)) folds into the UvrD-like helicase ATP-binding domain. ATP is bound by residues 22–29 (AGAGSGKT) and Arg-278. Residues 281–564 (GRILKAANKL…QLMTLHSSKG (284 aa)) enclose the UvrD-like helicase C-terminal domain.

This sequence belongs to the helicase family. UvrD subfamily. Homodimer.

It catalyses the reaction Couples ATP hydrolysis with the unwinding of duplex DNA by translocating in the 3'-5' direction.. It carries out the reaction ATP + H2O = ADP + phosphate + H(+). Functionally, rep helicase is a single-stranded DNA-dependent ATPase involved in DNA replication; it can initiate unwinding at a nick in the DNA. It binds to the single-stranded DNA and acts in a progressive fashion along the DNA in the 3' to 5' direction. The chain is ATP-dependent DNA helicase Rep from Buchnera aphidicola subsp. Schizaphis graminum (strain Sg).